Reading from the N-terminus, the 326-residue chain is Methionine import ATP-binding protein MetN (326 aa).

Residues 1-226 (MVFYTIGPQT…PQQPITRQFV (226 aa)) enclose the ABC transporter domain. 23–30 (GYSGAGKS) contacts ATP.

The protein belongs to the ABC transporter superfamily. Methionine importer (TC 3.A.1.24) family. The complex is composed of two ATP-binding proteins (MetN), two transmembrane proteins (MetI) and a solute-binding protein (MetQ).

The protein resides in the cell inner membrane. It carries out the reaction L-methionine(out) + ATP + H2O = L-methionine(in) + ADP + phosphate + H(+). It catalyses the reaction D-methionine(out) + ATP + H2O = D-methionine(in) + ADP + phosphate + H(+). Its function is as follows. Part of the ABC transporter complex MetNIQ involved in methionine import. Responsible for energy coupling to the transport system. This Erwinia pyrifoliae (strain DSM 12162 / Ep1/96) protein is Methionine import ATP-binding protein MetN.